The chain runs to 367 residues: Avirulence protein ATR5 (367 aa).

The signal sequence occupies residues 1–16 (MRLISPALVVSTAIQA). N-linked (GlcNAc...) asparagine glycosylation occurs at Asn20. The segment at 33–65 (NPLASAHPPDVGYDGVPAGRVRNPDDPTTEERT) is disordered. The segment covering 54–65 (RNPDDPTTEERT) has biased composition (basic and acidic residues). Positions 61 to 64 (TEER) match the dEER motif.

The protein belongs to the RxLR effector family.

The protein localises to the secreted. The protein resides in the host cell. Its function is as follows. Secreted effector that acts as an elicitor of hypersensitive response (HR) specifically on plants carrying defense protein RPP5. The chain is Avirulence protein ATR5 from Hyaloperonospora arabidopsidis (strain Emoy2) (Downy mildew agent).